We begin with the raw amino-acid sequence, 545 residues long: Hydroxylamine reductase (545 aa).

[4Fe-4S] cluster contacts are provided by cysteine 3, cysteine 6, cysteine 15, and cysteine 21. Hybrid [4Fe-2O-2S] cluster is bound by residues histidine 240, glutamate 264, cysteine 309, cysteine 401, cysteine 429, cysteine 454, glutamate 488, and lysine 490. Position 401 is a cysteine persulfide (cysteine 401).

This sequence belongs to the HCP family. Requires [4Fe-4S] cluster as cofactor. It depends on hybrid [4Fe-2O-2S] cluster as a cofactor.

It localises to the cytoplasm. The enzyme catalyses A + NH4(+) + H2O = hydroxylamine + AH2 + H(+). In terms of biological role, catalyzes the reduction of hydroxylamine to form NH(3) and H(2)O. The chain is Hydroxylamine reductase from Rippkaea orientalis (strain PCC 8801 / RF-1) (Cyanothece sp. (strain PCC 8801)).